Here is a 791-residue protein sequence, read N- to C-terminus: Endonuclease MutS2 (791 aa).

Residue 337 to 344 (GPNTGGKT) coordinates ATP. Positions 689–715 (AAQASQKKPEKSVRSSRGLRSSRASSE) are disordered. Over residues 703–713 (SSRGLRSSRAS) the composition is skewed to low complexity. Positions 716-791 (LDLRGQRYEE…GTGATIVNLQ (76 aa)) constitute a Smr domain.

This sequence belongs to the DNA mismatch repair MutS family. MutS2 subfamily. Homodimer. Binds to stalled ribosomes, contacting rRNA.

Functionally, endonuclease that is involved in the suppression of homologous recombination and thus may have a key role in the control of bacterial genetic diversity. In terms of biological role, acts as a ribosome collision sensor, splitting the ribosome into its 2 subunits. Detects stalled/collided 70S ribosomes which it binds and splits by an ATP-hydrolysis driven conformational change. Acts upstream of the ribosome quality control system (RQC), a ribosome-associated complex that mediates the extraction of incompletely synthesized nascent chains from stalled ribosomes and their subsequent degradation. Probably generates substrates for RQC. The protein is Endonuclease MutS2 of Lactobacillus gasseri (strain ATCC 33323 / DSM 20243 / BCRC 14619 / CIP 102991 / JCM 1131 / KCTC 3163 / NCIMB 11718 / NCTC 13722 / AM63).